The sequence spans 389 residues: 3-ketoacyl-CoA thiolase (389 aa).

The active-site Acyl-thioester intermediate is cysteine 91. Catalysis depends on proton acceptor residues histidine 343 and cysteine 373.

Belongs to the thiolase-like superfamily. Thiolase family. Heterotetramer of two alpha chains (FadB) and two beta chains (FadA).

It localises to the cytoplasm. The enzyme catalyses an acyl-CoA + acetyl-CoA = a 3-oxoacyl-CoA + CoA. It participates in lipid metabolism; fatty acid beta-oxidation. Functionally, catalyzes the final step of fatty acid oxidation in which acetyl-CoA is released and the CoA ester of a fatty acid two carbons shorter is formed. In Pseudoalteromonas translucida (strain TAC 125), this protein is 3-ketoacyl-CoA thiolase.